The chain runs to 119 residues: Large ribosomal subunit protein uL22c (119 aa).

The protein belongs to the universal ribosomal protein uL22 family. Part of the 50S ribosomal subunit.

Its subcellular location is the plastid. The protein resides in the chloroplast. Functionally, this protein binds specifically to 23S rRNA. In terms of biological role, the globular domain of the protein is located near the polypeptide exit tunnel on the outside of the subunit, while an extended beta-hairpin is found that lines the wall of the exit tunnel in the center of the 70S ribosome. In Spirogyra maxima (Green alga), this protein is Large ribosomal subunit protein uL22c (rpl22).